A 244-amino-acid polypeptide reads, in one-letter code: Small ribosomal subunit protein uS2 (244 aa).

It belongs to the universal ribosomal protein uS2 family.

The polypeptide is Small ribosomal subunit protein uS2 (Buchnera aphidicola subsp. Schizaphis graminum (strain Sg)).